A 129-amino-acid polypeptide reads, in one-letter code: Small ribosomal subunit protein uS11 (129 aa).

This sequence belongs to the universal ribosomal protein uS11 family. As to quaternary structure, part of the 30S ribosomal subunit. Interacts with proteins S7 and S18. Binds to IF-3.

In terms of biological role, located on the platform of the 30S subunit, it bridges several disparate RNA helices of the 16S rRNA. Forms part of the Shine-Dalgarno cleft in the 70S ribosome. The sequence is that of Small ribosomal subunit protein uS11 from Bartonella bacilliformis (strain ATCC 35685 / KC583 / Herrer 020/F12,63).